The following is a 205-amino-acid chain: Adenylyl-sulfate kinase (205 aa).

Position 31-38 (31-38 (GLSGAGKS)) interacts with ATP. The Phosphoserine intermediate role is filled by Ser-105.

This sequence belongs to the APS kinase family.

The catalysed reaction is adenosine 5'-phosphosulfate + ATP = 3'-phosphoadenylyl sulfate + ADP + H(+). It functions in the pathway sulfur metabolism; hydrogen sulfide biosynthesis; sulfite from sulfate: step 2/3. Its function is as follows. Catalyzes the synthesis of activated sulfate. The chain is Adenylyl-sulfate kinase from Shewanella sp. (strain MR-4).